Consider the following 70-residue polypeptide: ATP synthase subunit c (70 aa).

2 helical membrane-spanning segments follow: residues 4–24 and 45–65; these read IAAAIAIGLGALGAGIGNGLI and LMFIGVALVEALPIIAVVIAF.

It belongs to the ATPase C chain family. In terms of assembly, F-type ATPases have 2 components, F(1) - the catalytic core - and F(0) - the membrane proton channel. F(1) has five subunits: alpha(3), beta(3), gamma(1), delta(1), epsilon(1). F(0) has three main subunits: a(1), b(2) and c(10-14). The alpha and beta chains form an alternating ring which encloses part of the gamma chain. F(1) is attached to F(0) by a central stalk formed by the gamma and epsilon chains, while a peripheral stalk is formed by the delta and b chains.

It localises to the cell membrane. Its function is as follows. F(1)F(0) ATP synthase produces ATP from ADP in the presence of a proton or sodium gradient. F-type ATPases consist of two structural domains, F(1) containing the extramembraneous catalytic core and F(0) containing the membrane proton channel, linked together by a central stalk and a peripheral stalk. During catalysis, ATP synthesis in the catalytic domain of F(1) is coupled via a rotary mechanism of the central stalk subunits to proton translocation. The protein is ATP synthase subunit c of Bacillus pumilus (strain SAFR-032).